A 153-amino-acid chain; its full sequence is Ribosome maturation factor RimP (153 aa).

The protein belongs to the RimP family.

The protein localises to the cytoplasm. In terms of biological role, required for maturation of 30S ribosomal subunits. This Glaesserella parasuis serovar 5 (strain SH0165) (Haemophilus parasuis) protein is Ribosome maturation factor RimP.